The sequence spans 89 residues: HssA/B-like protein 22 (89 aa).

Belongs to the hssA/B family.

This Dictyostelium discoideum (Social amoeba) protein is HssA/B-like protein 22 (hssl22).